A 126-amino-acid chain; its full sequence is uncharacterized protein (126 aa).

This is an uncharacterized protein from Salmonella typhi.